Consider the following 1165-residue polypeptide: Activity-dependent neuroprotector homeobox protein 2 (1165 aa).

Residues 73-96 (YCCSLCRYSTKVLTSLKNHLHRYH) form a C2H2-type 1 zinc finger. Residues 106–128 (IPCPNCPFSSQPRVVGKHFRMFH) form a C2H2-type 2; degenerate zinc finger. Lys146 is covalently cross-linked (Glycyl lysine isopeptide (Lys-Gly) (interchain with G-Cter in SUMO2)). Residues 155–178 (FTCLKCNFSNTLYYSMKKHVLVAH) form a C2H2-type 3; degenerate zinc finger. A C2H2-type 4 zinc finger spans residues 215–240 (YYCKKCSAIASSQDALMYHILTSDAH). Over residues 303–318 (SGTVQSVTVTPGTSGS) the composition is skewed to low complexity. Residues 303–327 (SGTVQSVTVTPGTSGSLTHSPPTTA) are disordered. The segment at 696–718 (KTCPVCNELFPSNVYQVHMEVAH) adopts a C2H2-type 5; degenerate zinc-finger fold. A C2H2-type 6; degenerate zinc finger spans residues 724–746 (QLCQVCNELFPANVYQVHMEVAH). The C2H2-type 7; degenerate zinc-finger motif lies at 777–798 (VRCLSCKCLVSQEELMHHLLMH). C2H2-type zinc fingers lie at residues 800-823 (LGCLFCPCTFHDVRGLVEHSRTKH) and 905-935 (LTCPFCLSTFMTADAYELHLKERHHVMPTVH). Residues 1005–1068 (PVKRKLPEGH…SGPSEDSLQA (64 aa)) form a disordered region. Residues Lys1009 and Lys1048 each participate in a glycyl lysine isopeptide (Lys-Gly) (interchain with G-Cter in SUMO2) cross-link. Positions 1009 to 1024 (KLPEGHLGPEDQRDGE) are enriched in basic and acidic residues. Positions 1090–1132 (DYFHRRPYPSRKEVELLSSLLWVWKIDVASFFGKRRYICMKAI) form a DNA-binding region, homeobox.

It belongs to the krueppel C2H2-type zinc-finger protein family. In terms of assembly, may interact with SMARCA4/BRG1. In terms of tissue distribution, expressed widely, with the highest level in the brain.

Its subcellular location is the nucleus. Its function is as follows. May be involved in transcriptional regulation. May play a role in neuronal function; perhaps involved in protection of brain tissues from oxidative stress. May be involved in erythroid differentiation. The sequence is that of Activity-dependent neuroprotector homeobox protein 2 (Adnp2) from Mus musculus (Mouse).